Consider the following 253-residue polypeptide: Kojic acid related protein 1 (253 aa).

3 helical membrane passes run 23–43, 53–73, and 117–137; these read PIKF…FILI, IFYP…YIVS, and ALFG…IVSV. The tract at residues 174–253 is disordered; the sequence is FPMMSPALPS…PPPPKKAAKV (80 aa). Composition is skewed to polar residues over residues 184–200 and 226–240; these read GGTT…SPEF and QQES…NQPQ. Residues 242-253 are compositionally biased toward pro residues; the sequence is YFPPPPKKAAKV.

The protein resides in the membrane. Its function is as follows. Involved in mycelium growth and repression of conidia formation by affecting the expression of brlA and abaA. Acts as a negative regulation factor for kojic acid production through affecting the expression of kojA, kojR and kojT. In Aspergillus oryzae (strain ATCC 42149 / RIB 40) (Yellow koji mold), this protein is Kojic acid related protein 1.